Reading from the N-terminus, the 214-residue chain is cAMP-activated global transcriptional regulator Vfr (214 aa).

Residues 59 to 60 (RE), 73 to 75 (GEL), 87 to 88 (RS), 132 to 133 (TT), arginine 179, and arginine 185 each bind 3',5'-cyclic AMP. Positions 142 to 214 (LDVTGRVART…GKTMVVFGTR (73 aa)) constitute an HTH crp-type domain. The H-T-H motif DNA-binding region spans 174-193 (RQEIGRIVGCSREMVGRVLK).

Homodimer.

Its function is as follows. Global cAMP-dependent transcriptional regulator that controls virulence gene expression by distinct cAMP-dependent and -independent mechanisms, which allow to fine tune its virulence program in response to specific host cues or environments. Controls the expression of many regulatory targets including type II, type III and type IV secretion systems, flagellar-mediated motility, and quorum sensing systems. Transcriptional control is exerted by binding to a well-characterized consensus site (5'-ANWWTGNGAWNYAGWTCACAT) within target promoters. Directly binds to the toxA upstream region to regulate exotoxin A production, to the lasR gene promoter to activate the las quorum-sensing system or to the exsA promoter to regulate type III secretion system. Autoregulates as well its own expression. The chain is cAMP-activated global transcriptional regulator Vfr (vfr) from Pseudomonas aeruginosa (strain ATCC 15692 / DSM 22644 / CIP 104116 / JCM 14847 / LMG 12228 / 1C / PRS 101 / PAO1).